Reading from the N-terminus, the 620-residue chain is Probable potassium transport system protein Kup 1 (620 aa).

12 consecutive transmembrane segments (helical) span residues 7–27 (GIGL…TSPL), 50–70 (VLSL…VIVI), 102–122 (MMLG…TPAI), 136–156 (PDLK…LFAI), 168–188 (FGPV…ANIV), 211–231 (LMSF…EALY), 246–266 (WFGL…ALLI), 284–304 (MVVP…QAVI), 336–356 (IYVP…VVGF), 368–388 (IAVT…AALL), 393–413 (PVVV…FFAA), and 415–435 (IIKV…SFTV).

Belongs to the HAK/KUP transporter (TC 2.A.72) family.

The protein localises to the cell inner membrane. The enzyme catalyses K(+)(in) + H(+)(in) = K(+)(out) + H(+)(out). Its function is as follows. Transport of potassium into the cell. Likely operates as a K(+):H(+) symporter. This is Probable potassium transport system protein Kup 1 from Rhodopseudomonas palustris (strain ATCC BAA-98 / CGA009).